The chain runs to 745 residues: MVPHRARRLLNPMAVGPLAQQLGSLTVFTRDDFEEEWHLVASGGFSKVFQARHKRWRTQYAIKCSPCLQKETTSSEVTCLFEEAVKMEKIKFQHIVSIYGVCKQPLGIVMEFMASGSLEKTLPTHSLCWPLKLRIIHETSLAMNFLHSIKPPLLHLDLKPGNILLDNNMHVKISDFGLSKWMEQSTQKQYIERSALRGTLSYIPPEMFLENNKAPGPEYDVYSFAIVIWEILTQKKPYAGLNMMTIIIRVAAGMRPSLQDVSDEWPEEVHQMVNLMKRCWDQDPKKRPCFLNVAVETDMLLSLFQSPMTDPGCEALTQKVSCKPSLSQPHKVSKEVNQEIADSVSSDSLKWILQLSDSKSLVASDVYENRVTPLHFLVAGGSLEQVRLLLSHDVDVDCQTASGYTPLLIATQDQQPDLCALLLAHGADTNLADEDGWAPLHFAAQNGDDHTARLLLDHGALVNAREHEGWTPLHLAAQNNFENVARLLVSRQADLSPHEAEGKTPLHVAAYFGHIGLVKLLSGQGAELDAQQRNLRTPLHLAVERGKVRAIQHLLKCGALPDALDHSGYSPLHIAAARGKDLIFKMLLRYGASLELRTQQGWTPLHLATYKGHLEIIHQLAKSHVDLDALGSMQWTPLHLAAFQGEEGVMLALLQCGANPNAAEQSGWTPLHLAVHKGTFLGITHLLEYGADIHACNKVGWTPAHLAALKGNTAILKVLVKAAAQVDVKGGVSCTPLQLAIHSPK.

One can recognise a Protein kinase domain in the interval 34-301 (EEEWHLVASG…NVAVETDMLL (268 aa)). Residues 40–48 (VASGGFSKV) and Lys63 contribute to the ATP site. The active-site Proton acceptor is the Asp157. ANK repeat units lie at residues 369 to 398 (NRVT…DVDC), 402 to 431 (SGYT…DTNL), 435 to 464 (DGWA…LVNA), 468 to 497 (EGWT…DLSP), 501 to 530 (EGKT…ELDA), 534 to 563 (NLRT…LPDA), 567 to 596 (SGYS…SLEL), 600 to 629 (QGWT…DLDA), 633 to 662 (MQWT…NPNA), 666 to 695 (SGWT…DIHA), and 699 to 728 (VGWT…QVDV).

The protein belongs to the protein kinase superfamily. TKL Ser/Thr protein kinase family.

The enzyme catalyses L-seryl-[protein] + ATP = O-phospho-L-seryl-[protein] + ADP + H(+). It catalyses the reaction L-threonyl-[protein] + ATP = O-phospho-L-threonyl-[protein] + ADP + H(+). In Mus musculus (Mouse), this protein is Ankyrin repeat and protein kinase domain-containing protein 1 (Ankk1).